The primary structure comprises 820 residues: Serine/threonine-protein phosphatase 4 regulatory subunit 3 (820 aa).

Positions 1–100 (MSDTRRRVKV…DEIWEKICQV (100 aa)) constitute a WH1 domain. Disordered stretches follow at residues 687-711 (EDEE…DFPE) and 750-820 (AANG…RLGS). The span at 701–711 (EKTKTEDDFPE) shows a compositional bias: basic and acidic residues. Polar residues predominate over residues 750–761 (AANGANSTNSKS). A compositionally biased stretch (low complexity) spans 770-784 (SSNGSSSKNTSLTTT). The segment covering 798-809 (YPDDEDEEEEED) has biased composition (acidic residues).

This sequence belongs to the SMEK family. As to quaternary structure, serine/threonine-protein phosphatase 4 (PP4) occurs in different assemblies of the catalytic and one or more regulatory subunits.

Its function is as follows. Regulatory subunit of serine/threonine-protein phosphatase 4 (PP4). This Xenopus tropicalis (Western clawed frog) protein is Serine/threonine-protein phosphatase 4 regulatory subunit 3.